A 542-amino-acid polypeptide reads, in one-letter code: Malolactic enzyme (542 aa).

Tyr92 functions as the Proton donor in the catalytic mechanism. The active-site Proton acceptor is Lys165. Lys165 contacts substrate. Positions 236, 237, and 260 each coordinate Mn(2+). NAD(+) contacts are provided by residues 293–296 (AGTA), Asn405, and Asn450. A substrate-binding site is contributed by Asn450.

This sequence belongs to the malic enzymes family. Homodimer. Mn(2+) serves as cofactor. NAD(+) is required as a cofactor.

The enzyme catalyses (S)-malate + H(+) = (S)-lactate + CO2. Oxamate, fructose-1,6-diphosphate and L-lactate act as non-competitive inhibitors, whereas succinate, citrate and tartrate isomers produce a competitive inhibition. In terms of biological role, involved in the malolactic fermentation (MLF) of wine, which results in a natural decrease in acidity and favorable changes in wine flavors. Catalyzes the decarboxylation of L-malate to L-lactate. In Leuconostoc mesenteroides, this protein is Malolactic enzyme (mleS).